The primary structure comprises 357 residues: SUN domain-containing protein 3 (357 aa).

Residues 1 to 47 (MSGKTKARRAAMFFRRCSEDASGSASGNALLSEDENPDANGVTRSWK) are Nuclear-facing. Residues 48–64 (IILSTMLTLTFLLVGLL) form a helical membrane-spanning segment. Residues 65-357 (NHQWLKETDV…RVHGTPGKHI (293 aa)) lie on the Perinuclear space side of the membrane. The stretch at 98–146 (RLRMPKEQLELLKKESQNLENNFRQILFLIEQIDVLKALLRDMKDGMDN) forms a coiled coil. An SUN domain is found at 193 to 354 (GASIIEAGTS…YRFRVHGTPG (162 aa)).

As to quaternary structure, self-associates. Interacts with SYNE1 and SPAG4/SUN4. Proposed to form a spermatogenesis-specific LINC complex with SYNE1 during sperm head formation possibly implicating a SUN domain-based heterotrimer with SPAG4/SUN4 associating with SYNE1.

It is found in the membrane. It localises to the nucleus envelope. The protein resides in the nucleus inner membrane. Functionally, as a probable component of the LINC (LInker of Nucleoskeleton and Cytoskeleton) complex, involved in the connection between the nuclear lamina and the cytoskeleton. The nucleocytoplasmic interactions established by the LINC complex play an important role in the transmission of mechanical forces across the nuclear envelope and in nuclear movement and positioning. May be involved in nuclear remodeling during sperm head formation in spermatogenesis. A probable SUN3:SYNE1 LINC complex may tether spermatid nuclei to posterior cytoskeletal structures such as the manchette. The polypeptide is SUN domain-containing protein 3 (SUN3) (Homo sapiens (Human)).